Here is a 218-residue protein sequence, read N- to C-terminus: UPF0126 membrane protein SCO4104 (218 aa).

7 helical membrane passes run 8 to 28, 37 to 57, 64 to 84, 91 to 111, 118 to 138, 154 to 174, and 179 to 199; these read LLAL…LTAV, GVVV…DVLI, AFLD…AFAV, LEPA…VIGA, GLAV…GGTI, LYAI…ETGV, and AALG…HFGI.

It belongs to the UPF0126 family.

Its subcellular location is the cell membrane. In Streptomyces coelicolor (strain ATCC BAA-471 / A3(2) / M145), this protein is UPF0126 membrane protein SCO4104.